Consider the following 102-residue polypeptide: A-type ATP synthase subunit F (102 aa).

Belongs to the V-ATPase F subunit family. As to quaternary structure, has multiple subunits with at least A(3), B(3), C, D, E, F, H, I and proteolipid K(x).

It is found in the cell membrane. Functionally, component of the A-type ATP synthase that produces ATP from ADP in the presence of a proton gradient across the membrane. The protein is A-type ATP synthase subunit F of Thermococcus onnurineus (strain NA1).